The chain runs to 756 residues: Protease KEX1 (756 aa).

A signal peptide spans 1 to 24; sequence MILSSQLMLALIAVSGYGKAMQVP. Residues Asn121, Asn144, and Asn152 are each glycosylated (N-linked (GlcNAc...) asparagine). A Peptidase S8 domain is found at 130-440; that stretch reads QWHLINPNYP…FGKLDAYNIV (311 aa). Active-site charge relay system residues include Asp164 and His202. 2 cysteine pairs are disulfide-bonded: Cys218-Cys365 and Cys310-Cys340. The Charge relay system role is filled by Ser373. 2 N-linked (GlcNAc...) asparagine glycosylation sites follow: Asn392 and Asn538. In terms of domain architecture, P/Homo B spans 449 to 583; it reads VNPQGWLYLP…RLKMFGETID (135 aa). Positions 599–632 are disordered; sequence AEVKSTESKTTTPTAQTSSFTTTSGEETSGANKL. The segment covering 606–628 has biased composition (low complexity); it reads SKTTTPTAQTSSFTTTSGEETSG. The helical transmembrane segment at 641-661 threads the bilayer; the sequence is LYLAIFVIGAIVIIIYYLFFL. The tract at residues 715-756 is disordered; sequence EEELSPRESSSNNPFGNESLESFDNSPDHTSNLLGQNSIPNK. Residues 721–756 are compositionally biased toward polar residues; it reads RESSSNNPFGNESLESFDNSPDHTSNLLGQNSIPNK.

Belongs to the peptidase S8 family. Furin subfamily. The cofactor is Ca(2+).

It is found in the membrane. In terms of biological role, probably involved in the processing of the precursor of m1-toxin and alpha-factor. This chain is Protease KEX1 (KEX1), found in Kluyveromyces lactis (strain ATCC 8585 / CBS 2359 / DSM 70799 / NBRC 1267 / NRRL Y-1140 / WM37) (Yeast).